A 104-amino-acid chain; its full sequence is Large ribosomal subunit protein bL21 (104 aa).

It belongs to the bacterial ribosomal protein bL21 family. Part of the 50S ribosomal subunit. Contacts protein L20.

Its function is as follows. This protein binds to 23S rRNA in the presence of protein L20. The protein is Large ribosomal subunit protein bL21 of Lactococcus lactis subsp. cremoris (strain MG1363).